Here is a 454-residue protein sequence, read N- to C-terminus: Chromosomal replication initiator protein DnaA (454 aa).

The tract at residues 1 to 83 (MTEKEHFFWN…IKVEYVFDEA (83 aa)) is domain I, interacts with DnaA modulators. The interval 83–113 (ALVSETKPTLANNDFSNKREQQTPDLPTLNS) is domain II. Residues 114-332 (DLNSKYTFDN…GALKDISLVA (219 aa)) are domain III, AAA+ region. Positions 158, 160, 161, and 162 each coordinate ATP. The interval 333–454 (NVRQLDTITV…EIDTIKNKIK (122 aa)) is domain IV, binds dsDNA.

It belongs to the DnaA family. In terms of assembly, oligomerizes as a right-handed, spiral filament on DNA at oriC.

The protein localises to the cytoplasm. Its function is as follows. Plays an essential role in the initiation and regulation of chromosomal replication. ATP-DnaA binds to the origin of replication (oriC) to initiate formation of the DNA replication initiation complex once per cell cycle. Binds the DnaA box (a 9 base pair repeat at the origin) and separates the double-stranded (ds)DNA. Forms a right-handed helical filament on oriC DNA; dsDNA binds to the exterior of the filament while single-stranded (ss)DNA is stabiized in the filament's interior. The ATP-DnaA-oriC complex binds and stabilizes one strand of the AT-rich DNA unwinding element (DUE), permitting loading of DNA polymerase. After initiation quickly degrades to an ADP-DnaA complex that is not apt for DNA replication. Binds acidic phospholipids. This Streptococcus thermophilus (strain ATCC BAA-250 / LMG 18311) protein is Chromosomal replication initiator protein DnaA.